A 207-amino-acid chain; its full sequence is UPF0126 inner membrane protein YadS (207 aa).

A helical transmembrane segment spans residues 1–21; the sequence is MLVYWLDIVGTAVFAISGVLL. Topologically, residues 22-29 are cytoplasmic; sequence AGKLRMDP. A helical transmembrane segment spans residues 30-50; it reads FGVLVLGVVTAVGGGTIRDMA. Topologically, residues 51–58 are periplasmic; the sequence is LDHGPVFW. The helical transmembrane segment at 59 to 79 threads the bilayer; it reads VKDPTDLVVAMVTSMLTIVLV. The Cytoplasmic segment spans residues 80 to 85; that stretch reads RQPRRL. The chain crosses the membrane as a helical span at residues 86–106; that stretch reads PKWMLPVLDAVGLAVFVGIGV. Over 107–112 the chain is Periplasmic; that stretch reads NKAFNA. The helical transmembrane segment at 113 to 133 threads the bilayer; sequence EAGPLIAVCMGVITGVGGGII. At 134–148 the chain is on the cytoplasmic side; the sequence is RDVLAREIPMILRTE. Residues 149-169 form a helical membrane-spanning segment; sequence IYATACIIGGIVHATAYYTFS. A topological domain (periplasmic) is located at residue Val-170. A helical transmembrane segment spans residues 171–191; the sequence is PLETASMMGMVVTLLIRLAAI. Residues 192–207 lie on the Cytoplasmic side of the membrane; that stretch reads RWHLKLPTFALDENGR.

Belongs to the UPF0126 family.

It localises to the cell inner membrane. In Escherichia coli O6:H1 (strain CFT073 / ATCC 700928 / UPEC), this protein is UPF0126 inner membrane protein YadS (yadS).